A 254-amino-acid chain; its full sequence is tRNA (guanine-N(1)-)-methyltransferase (254 aa).

Residues Gly121 and 141–146 (LGDYVL) contribute to the S-adenosyl-L-methionine site.

The protein belongs to the RNA methyltransferase TrmD family. As to quaternary structure, homodimer.

The protein localises to the cytoplasm. The catalysed reaction is guanosine(37) in tRNA + S-adenosyl-L-methionine = N(1)-methylguanosine(37) in tRNA + S-adenosyl-L-homocysteine + H(+). Functionally, specifically methylates guanosine-37 in various tRNAs. The sequence is that of tRNA (guanine-N(1)-)-methyltransferase from Psychrobacter cryohalolentis (strain ATCC BAA-1226 / DSM 17306 / VKM B-2378 / K5).